A 213-amino-acid polypeptide reads, in one-letter code: Large ribosomal subunit protein uL3 (213 aa).

The interval 122-147 (AIKRHGQSRGPMAHGSRYHRRPGSMG) is disordered.

The protein belongs to the universal ribosomal protein uL3 family. As to quaternary structure, part of the 50S ribosomal subunit. Forms a cluster with proteins L14 and L19.

Functionally, one of the primary rRNA binding proteins, it binds directly near the 3'-end of the 23S rRNA, where it nucleates assembly of the 50S subunit. In Geobacillus stearothermophilus (Bacillus stearothermophilus), this protein is Large ribosomal subunit protein uL3.